A 455-amino-acid polypeptide reads, in one-letter code: Probable glycine dehydrogenase (decarboxylating) subunit 1 (455 aa).

Belongs to the GcvP family. N-terminal subunit subfamily. As to quaternary structure, the glycine cleavage system is composed of four proteins: P, T, L and H. In this organism, the P 'protein' is a heterodimer of two subunits.

The catalysed reaction is N(6)-[(R)-lipoyl]-L-lysyl-[glycine-cleavage complex H protein] + glycine + H(+) = N(6)-[(R)-S(8)-aminomethyldihydrolipoyl]-L-lysyl-[glycine-cleavage complex H protein] + CO2. Its function is as follows. The glycine cleavage system catalyzes the degradation of glycine. The P protein binds the alpha-amino group of glycine through its pyridoxal phosphate cofactor; CO(2) is released and the remaining methylamine moiety is then transferred to the lipoamide cofactor of the H protein. The protein is Probable glycine dehydrogenase (decarboxylating) subunit 1 of Francisella tularensis subsp. holarctica (strain FTNF002-00 / FTA).